A 440-amino-acid chain; its full sequence is Chromosomal replication initiator protein DnaA (440 aa).

The domain I, interacts with DnaA modulators stretch occupies residues 1-72 (MTELDSLWEA…KEFAQRELGR (72 aa)). Residues 72–103 (RNIEPHYVLEGEFTYTNKKTEDDPTPSFEMDT) are domain II. Residues 104–320 (PLNPHYNFGT…GALTKVQAFA (217 aa)) form a domain III, AAA+ region region. Residues G148, G150, K151, and T152 each coordinate ATP. The interval 321-440 (NLSGERITPS…ITKLKAKLRS (120 aa)) is domain IV, binds dsDNA.

This sequence belongs to the DnaA family. As to quaternary structure, oligomerizes as a right-handed, spiral filament on DNA at oriC.

The protein localises to the cytoplasm. Plays an essential role in the initiation and regulation of chromosomal replication. ATP-DnaA binds to the origin of replication (oriC) to initiate formation of the DNA replication initiation complex once per cell cycle. Binds the DnaA box (a 9 base pair repeat at the origin) and separates the double-stranded (ds)DNA. Forms a right-handed helical filament on oriC DNA; dsDNA binds to the exterior of the filament while single-stranded (ss)DNA is stabiized in the filament's interior. The ATP-DnaA-oriC complex binds and stabilizes one strand of the AT-rich DNA unwinding element (DUE), permitting loading of DNA polymerase. After initiation quickly degrades to an ADP-DnaA complex that is not apt for DNA replication. Binds acidic phospholipids. The chain is Chromosomal replication initiator protein DnaA from Limosilactobacillus reuteri (strain DSM 20016) (Lactobacillus reuteri).